The following is a 102-amino-acid chain: NADH-quinone oxidoreductase subunit K (102 aa).

Helical transmembrane passes span 5–25, 31–51, and 66–86; these read LEHY…GIFV, IVIL…MVAF, and FVLT…VVFF.

Belongs to the complex I subunit 4L family. NDH-1 is composed of 14 different subunits. Subunits NuoA, H, J, K, L, M, N constitute the membrane sector of the complex.

Its subcellular location is the cellular chromatophore membrane. The catalysed reaction is a quinone + NADH + 5 H(+)(in) = a quinol + NAD(+) + 4 H(+)(out). In terms of biological role, NDH-1 shuttles electrons from NADH, via FMN and iron-sulfur (Fe-S) centers, to quinones in the respiratory chain. The immediate electron acceptor for the enzyme in this species is believed to be ubiquinone. Couples the redox reaction to proton translocation (for every two electrons transferred, four hydrogen ions are translocated across the cytoplasmic membrane), and thus conserves the redox energy in a proton gradient. The polypeptide is NADH-quinone oxidoreductase subunit K (Rhodobacter capsulatus (Rhodopseudomonas capsulata)).